The primary structure comprises 174 residues: Shikimate kinase 2 (174 aa).

12 to 17 (GAGKTT) serves as a coordination point for ATP. Mg(2+) contacts are provided by threonine 16 and aspartate 32. Substrate-binding residues include aspartate 34, arginine 58, and glycine 79. The LID domain stretch occupies residues 112 to 126 (EEYPQDTQRPTLTGR). Arginine 120 lines the ATP pocket. Arginine 139 is a binding site for substrate.

Belongs to the shikimate kinase family. AroL subfamily. Monomer. Requires Mg(2+) as cofactor.

The protein resides in the cytoplasm. It carries out the reaction shikimate + ATP = 3-phosphoshikimate + ADP + H(+). Its pathway is metabolic intermediate biosynthesis; chorismate biosynthesis; chorismate from D-erythrose 4-phosphate and phosphoenolpyruvate: step 5/7. Its function is as follows. Catalyzes the specific phosphorylation of the 3-hydroxyl group of shikimic acid using ATP as a cosubstrate. The chain is Shikimate kinase 2 from Serratia proteamaculans (strain 568).